We begin with the raw amino-acid sequence, 1169 residues long: MRRLSAILPILLLSNFWPTVESLNYKCHNDQILVVQSFGNDTIRMHCQRLDLCGYQKLKCDYDELQPQCGGKLNFVSHVNQKGSTAPVEHTCCNLFNPRSHHSIPTHIGNDCFIYELPDGSSNGKKVDPAPADDAPYAVLKNPAEIPEQFDGVTGYRLRLFLLKNKSPPTLLVKGIERRLDGYRVTICRPRCTSYDKVVNDNEGAEDGEWKAISWSSWSSSSWSTWARHAFNKAAAEGGEAAERIRTRMPIGEKTVAGAAGATGAAGSDKSNINIHVESNGNNNNSFEGGRSSSEKSDGQLNREISGSSEAGAGGKGGAGADGAAGSGAGAGAGAGTNGNINITVHTDGKSGGNAVAVANANVTVNGAGGVSTTGTGAQTGNESGLGGSAGTDKAGGKKGGHGDSGDSGNNKNKDNGKGKGKGKNDEEDEEDNGDEDGNGKGGNGGNPKGEWDDGDGDEDDDGTDGGSKESGNNGKGKGKGSGDGDGNRNGNGDGNGRPKGDGNIKINIHSPDDNDLLEKDENGPNGKGGAGNGNGDGDKDNNGKGNGTGDGDGDGNGNGNGLTGDGNGTGDGDNNESGNGNGDGSDKNSGAGAGTKPENREGGDGNGNGTGDGNGDGNDNGNGSKGLGTGSGDGKGEGNKSGTPGKSDGKEDGAGSNGSGNGKEGDGNKSGGSGKGGAGNGKSGDGSGDGKNNGNGGTGDGKDKNGKGSGSGDNDKSGTRAAGKGNAEGNGKGNGNDGKGSGSGDGSGAGGKGDKSDSESGNEADGKDGKKNEGAGGEAAAGSGGANKGGSDGDDDDVDVTDVEVGTKPLTGTKLEELLAKLPNETADGNATGDGNEFGTVQTGAKHNAESSASGIPLVQARSNTVNGGAPVPPAPGSGATGSGTSGSGTSESVTNGSGATESGSTGSGTTGTGTSGTGSSGTGASAARTSSIAGDAPQAAVLADTPGAAGAAGGGRSNCFSADSLVTTVTGQKRMDELQIGDYVLVPSSGNVLKYEKVEMFYHREPKTRTNFVVLYTKSGRKLSLTGRHLLPVAECSQVEQYTMNPDGIDVAMRESKYAEKARKGECVLSIDESGEVIADEIVRVGRMTNVGIYSPMTVEGSLIVDGVLSSCFSHLESHSAHKLIFDFIYYVYNAFGLLNTNHVDLQPIPTFVSFAQYLSKTVLPFS.

The signal sequence occupies residues 1-22; it reads MRRLSAILPILLLSNFWPTVES. 2 disordered regions span residues 261–338 and 368–933; these read GATG…AGTN and AGGV…RTSS. A compositionally biased stretch (low complexity) spans 278–292; the sequence is ESNGNNNNSFEGGRS. Positions 312–337 are enriched in gly residues; it reads GAGGKGGAGADGAAGSGAGAGAGAGT. Composition is skewed to acidic residues over residues 426 to 437 and 453 to 464; these read DEEDEEDNGDED and DDGDGDEDDDGT. Residues 511-523 show a composition bias toward basic and acidic residues; that stretch reads SPDDNDLLEKDEN. Composition is skewed to gly residues over residues 526-536, 545-572, 605-634, 656-700, and 727-752; these read NGKGGAGNGNG, KGNG…GTGD, DGNG…GSGD, GSNG…GGTG, and NAEG…GAGG. Basic and acidic residues predominate over residues 753-774; the sequence is KGDKSDSESGNEADGKDGKKNE. Positions 775–791 are enriched in gly residues; it reads GAGGEAAAGSGGANKGG. Over residues 793–803 the composition is skewed to acidic residues; it reads DGDDDDVDVTD. Residues 840 to 855 show a composition bias toward polar residues; the sequence is GTVQTGAKHNAESSAS. The span at 889–906 shows a compositional bias: low complexity; the sequence is SGTSESVTNGSGATESGS. Gly residues predominate over residues 907 to 923; the sequence is TGSGTTGTGTSGTGSSG. The span at 924 to 933 shows a compositional bias: low complexity; it reads TGASAARTSS.

As to expression, transiently expressed in head cells.

It is found in the cytoplasmic vesicle. The protein resides in the secreted. The protein localises to the extracellular space. It localises to the extracellular matrix. Functionally, required for cuticle shedding and normal alae morphology and localization, and subsequently larval development. The chain is Protein qua-1 from Caenorhabditis elegans.